The primary structure comprises 1060 residues: Protein transport protein Sec16B (1060 aa).

The tract at residues 1-86 is disordered; the sequence is MELWAPQRLP…GDWHQPVSGV (86 aa). A required for endoplasmic reticulum localization region spans residues 34 to 224; that stretch reads RPVPHSWHNG…PSLASESNLL (191 aa). Positions 41 to 50 are enriched in basic and acidic residues; sequence HNGERFHQWQ. Positions 51–60 are enriched in polar residues; it reads DNRGSPQPQQ. Phosphoserine occurs at positions 55, 143, 167, 188, and 191. Disordered regions lie at residues 163–236, 245–264, 711–733, 770–796, and 834–1060; these read ENQH…SSSY, APER…QADV, KVAG…GGTT, PSPQ…GTPR, and PGEN…TQPC. 2 stretches are compositionally biased toward polar residues: residues 165-195 and 213-222; these read QHSP…NSGQ and NKPSLASESN. Residues 223–236 are compositionally biased toward low complexity; that stretch reads LLQQRESGLSSSSY. A phosphoserine mark is found at Ser254 and Ser258. The tract at residues 271–713 is central conserved domain (CCD); required for localization to endoplasmic reticulum exit sites; the sequence is APMKFYIPHV…LRRQLEQKVA (443 aa). Polar residues predominate over residues 837 to 847; the sequence is NTVSQETSQPP. Thr858 carries the phosphothreonine modification. Phosphoserine is present on residues Ser868, Ser871, Ser874, Ser882, and Ser883. Basic and acidic residues-rich tracts occupy residues 875-890 and 899-908; these read AKED…DKNS and KLGDGKEHTK. The segment covering 909–918 has biased composition (low complexity); sequence SSGFGWFSWF. The span at 930–941 shows a compositional bias: acidic residues; that stretch reads GDEDSSDSPDSE. Over residues 991-1001 the composition is skewed to gly residues; it reads AAAGAGVGGLS. Residues 1031–1046 show a composition bias toward polar residues; the sequence is NPSQVPQLPTATSLNR.

The protein belongs to the SEC16 family. As to quaternary structure, SEC16A and SEC16B are each present in multiple copies in a heteromeric complex. Interacts with TFG. Interacts with SEC13. As to expression, ubiquitous.

The protein localises to the endoplasmic reticulum membrane. The protein resides in the golgi apparatus membrane. In terms of biological role, plays a role in the organization of the endoplasmic reticulum exit sites (ERES), also known as transitional endoplasmic reticulum (tER). Required for secretory cargo traffic from the endoplasmic reticulum to the Golgi apparatus. Involved in peroxisome biogenesis. Regulates the transport of peroxisomal biogenesis factors PEX3 and PEX16 from the ER to peroxisomes. The polypeptide is Protein transport protein Sec16B (SEC16B) (Homo sapiens (Human)).